We begin with the raw amino-acid sequence, 538 residues long: Serine/threonine-protein phosphatase 5 (538 aa).

3 TPR repeats span residues 13 to 46 (AEEFKSQANEAFKGHKYSSAIDLYTKAIELNSNN), 48 to 80 (VYWANRAFAHTKLEEYGSAIQDASKAIEVDSRY), and 81 to 114 (SKGYYRRGAAYLAMGKFKDALKDFQQVKRLSPND). A run of 2 helical transmembrane segments spans residues 163-183 (SSMPTKTALAAVVAAVMVVAV) and 185-205 (GFATTEILMVLVSVVLGTFWW). Residues aspartate 282, histidine 284, aspartate 311, and asparagine 343 each contribute to the Mn(2+) site. Histidine 344 serves as the catalytic Proton donor. Positions 392 and 467 each coordinate Mn(2+).

This sequence belongs to the PPP phosphatase family. PP-5 (PP-T) subfamily. In terms of assembly, interacts with PHYA and PHYB, mostly when they are phosphorylated and in Pfr forms. Mn(2+) is required as a cofactor.

The protein resides in the endoplasmic reticulum membrane. It is found in the nucleus membrane. It localises to the cytoplasm. The protein localises to the nucleus. Its subcellular location is the nucleoplasm. The protein resides in the nucleus speckle. It catalyses the reaction O-phospho-L-seryl-[protein] + H2O = L-seryl-[protein] + phosphate. It carries out the reaction O-phospho-L-threonyl-[protein] + H2O = L-threonyl-[protein] + phosphate. With respect to regulation, activated by arachidonic acid (AA). Functionally, isoform 2 dephosphorylates phosphorylated phytochromes, with a preference toward Pfr forms, and enhances phytochrome-mediated photoresponses, probably by enhancing their stability and their binding affinity for light signal transducers such as NDPK2. Can use para-nitrophenylphosphate (pNPP) as substrate. The protein is Serine/threonine-protein phosphatase 5 (PAPP5) of Arabidopsis thaliana (Mouse-ear cress).